The following is a 178-amino-acid chain: Ribonuclease M5 (178 aa).

The 94-residue stretch at 10-103 folds into the Toprim domain; that stretch reads DGVIVCEGKT…NSTKIGVAEA (94 aa). Residues glutamate 16, aspartate 62, and aspartate 64 each coordinate Mg(2+).

The protein belongs to the ribonuclease M5 family. Mg(2+) serves as cofactor.

The protein resides in the cytoplasm. The enzyme catalyses Endonucleolytic cleavage of RNA, removing 21 and 42 nucleotides, respectively, from the 5'- and 3'-termini of a 5S-rRNA precursor.. Its function is as follows. Required for correct processing of both the 5' and 3' ends of 5S rRNA precursor. Cleaves both sides of a double-stranded region yielding mature 5S rRNA in one step. The sequence is that of Ribonuclease M5 from Mycoplasma pneumoniae (strain ATCC 29342 / M129 / Subtype 1) (Mycoplasmoides pneumoniae).